We begin with the raw amino-acid sequence, 226 residues long: 2-C-methyl-D-erythritol 4-phosphate cytidylyltransferase (226 aa).

This sequence belongs to the IspD/TarI cytidylyltransferase family. IspD subfamily.

It catalyses the reaction 2-C-methyl-D-erythritol 4-phosphate + CTP + H(+) = 4-CDP-2-C-methyl-D-erythritol + diphosphate. It participates in isoprenoid biosynthesis; isopentenyl diphosphate biosynthesis via DXP pathway; isopentenyl diphosphate from 1-deoxy-D-xylulose 5-phosphate: step 2/6. Its function is as follows. Catalyzes the formation of 4-diphosphocytidyl-2-C-methyl-D-erythritol from CTP and 2-C-methyl-D-erythritol 4-phosphate (MEP). In Clostridium beijerinckii (strain ATCC 51743 / NCIMB 8052) (Clostridium acetobutylicum), this protein is 2-C-methyl-D-erythritol 4-phosphate cytidylyltransferase.